A 144-amino-acid chain; its full sequence is Maximins 7/H1 (144 aa).

The signal sequence occupies residues Met-1–Ala-18. Positions Arg-19 to Arg-43 are excised as a propeptide. Asn-70 carries the post-translational modification Asparagine amide. Residues Thr-74–Arg-123 constitute a propeptide that is removed on maturation. Leu-143 bears the Leucine amide mark.

This sequence belongs to the bombinin family. Expressed by the skin glands.

Its subcellular location is the secreted. Functionally, maximin-7 shows antimicrobial activity against bacteria and against the fungus C.albicans. It has little hemolytic activity. Its function is as follows. Maximin-H1 shows antibacterial activity against both Gram-positive and Gram-negative bacteria. It also shows antimicrobial activity against the fungus C.albicans. Shows strong hemolytic activity. The protein is Maximins 7/H1 of Bombina maxima (Giant fire-bellied toad).